A 309-amino-acid chain; its full sequence is MINNRENMSVSERLISSRQNRQLDEVRGRMIVTACALIMIAASVAITIFLGVKGLQSFLVNGVSPIEFLTSLNWNPTDSDPKYGVLPFIFGSFAVTILSALIAAPLGIAGAIFMTEIAPNWGKKVLQPVIELLVGIPSVVYGFIGLTVLVPFIAQFKSSGTGHSLLAGTIVLSVMILPTITSISADAMASLPKSLREGSYALGATRWQTIRKVLVPAAFPTLMTAVVLGMARAFGEALAVQMVIGNTRVLPESPFDTAGTLTTIITLNMGHTTYGSVENNTLWSMGLVLLVMSFLFILLIRYLSSRRKV.

6 helical membrane passes run 30–50 (MIVTACALIMIAASVAITIFL), 88–108 (FIFGSFAVTILSALIAAPLGI), 133–153 (LVGIPSVVYGFIGLTVLVPFI), 165–185 (LLAGTIVLSVMILPTITSISA), 214–234 (LVPAAFPTLMTAVVLGMARAF), and 280–300 (NTLWSMGLVLLVMSFLFILLI). Positions 89–300 (IFGSFAVTIL…VMSFLFILLI (212 aa)) constitute an ABC transmembrane type-1 domain.

Belongs to the binding-protein-dependent transport system permease family. CysTW subfamily.

The protein resides in the cell membrane. Its function is as follows. Part of the binding-protein-dependent transport system YqgGHIJK. Probably responsible for the translocation of the substrate across the membrane. The protein is Probable ABC transporter permease protein YqgH (yqgH) of Bacillus subtilis (strain 168).